A 153-amino-acid chain; its full sequence is Large ribosomal subunit protein uL22 (153 aa).

This sequence belongs to the universal ribosomal protein uL22 family. Part of the 50S ribosomal subunit.

Its function is as follows. This protein binds specifically to 23S rRNA. It makes multiple contacts with different domains of the 23S rRNA in the assembled 50S subunit and ribosome. The globular domain of the protein is located near the polypeptide exit tunnel on the outside of the subunit, while an extended beta-hairpin is found that lines the wall of the exit tunnel in the center of the 70S ribosome. The polypeptide is Large ribosomal subunit protein uL22 (Methanoculleus marisnigri (strain ATCC 35101 / DSM 1498 / JR1)).